The chain runs to 338 residues: Large ribosomal subunit protein uL10 (338 aa).

The tract at residues 295–338 (EVPTIQPTTPPEKKEEEEKKEEEEEEAETVSEEELAEGLGALFG) is disordered. The segment covering 312–330 (EKKEEEEEEAETVSEEELA) has biased composition (acidic residues).

This sequence belongs to the universal ribosomal protein uL10 family. Part of the 50S ribosomal subunit. Forms part of the ribosomal stalk which helps the ribosome interact with GTP-bound translation factors. Forms a heptameric L10(L12)2(L12)2(L12)2 complex, where L10 forms an elongated spine to which the L12 dimers bind in a sequential fashion.

In terms of biological role, forms part of the ribosomal stalk, playing a central role in the interaction of the ribosome with GTP-bound translation factors. This chain is Large ribosomal subunit protein uL10, found in Staphylothermus marinus (strain ATCC 43588 / DSM 3639 / JCM 9404 / F1).